A 157-amino-acid chain; its full sequence is Alanyl-tRNA editing protein AlaX-S (157 aa).

Residues His-9, His-13, Cys-116, and His-120 each contribute to the Zn(2+) site.

The protein belongs to the class-II aminoacyl-tRNA synthetase family. Editing domain AlaX-S subfamily. As to quaternary structure, monomer and homodimer; the dimer is less active in tRNA editing and does not have a zinc ion associated with it. Another report shows only a monomeric form. It depends on Zn(2+) as a cofactor.

The protein localises to the cytoplasm. Functionally, functions in trans to edit the amino acid moiety from mischarged charged Ser-tRNA(Ala). Has little activity against Gly-tRNA(Ala). The protein is Alanyl-tRNA editing protein AlaX-S (alaXS) of Pyrococcus horikoshii (strain ATCC 700860 / DSM 12428 / JCM 9974 / NBRC 100139 / OT-3).